The chain runs to 283 residues: Diaminopimelate epimerase (283 aa).

The substrate site is built by asparagine 13, glutamine 45, and asparagine 65. Cysteine 74 functions as the Proton donor in the catalytic mechanism. Substrate contacts are provided by residues 75–76, asparagine 156, asparagine 190, and 208–209; these read GN and ER. The active-site Proton acceptor is cysteine 217. Residue 218 to 219 participates in substrate binding; it reads GS.

This sequence belongs to the diaminopimelate epimerase family. Homodimer.

It is found in the cytoplasm. It carries out the reaction (2S,6S)-2,6-diaminopimelate = meso-2,6-diaminopimelate. Its pathway is amino-acid biosynthesis; L-lysine biosynthesis via DAP pathway; DL-2,6-diaminopimelate from LL-2,6-diaminopimelate: step 1/1. Its function is as follows. Catalyzes the stereoinversion of LL-2,6-diaminopimelate (L,L-DAP) to meso-diaminopimelate (meso-DAP), a precursor of L-lysine and an essential component of the bacterial peptidoglycan. This chain is Diaminopimelate epimerase, found in Bartonella tribocorum (strain CIP 105476 / IBS 506).